The following is a 514-amino-acid chain: LWamide neuropeptides (514 aa).

The N-terminal stretch at 1–22 (MALKCHLVLLAITLLLAQCSGS) is a signal peptide. Positions 23–53 (VDKKDSTTNHLDEKKTDSTEAHIVQETDALK) are enriched in basic and acidic residues. Positions 23–75 (VDKKDSTTNHLDEKKTDSTEAHIVQETDALKENSYLGAEEESKEEDKKRSAAP) are excised as a propeptide. A disordered region spans residues 23 to 180 (VDKKDSTTNH…PGLWGRSADA (158 aa)). Tryptophan 81 and tryptophan 90 each carry tryptophan amide. Positions 93–97 (SADAG) are excised as a propeptide. Residues tryptophan 102 and tryptophan 111 each carry the tryptophan amide modification. A propeptide spanning residues 114 to 118 (SADAG) is cleaved from the precursor. 2 positions are modified to tryptophan amide: tryptophan 123 and tryptophan 132. A propeptide spanning residues 135–139 (SADAG) is cleaved from the precursor. 2 positions are modified to tryptophan amide: tryptophan 144 and tryptophan 153. Positions 156–160 (SADAG) are excised as a propeptide. Tryptophan amide occurs at positions 165 and 174. Positions 177 to 181 (SADAR) are excised as a propeptide. Position 186 is a tryptophan amide (tryptophan 186). Residues 190-199 (EIYALWGGKR) constitute a propeptide that is removed on maturation. Tryptophan 205 carries the post-translational modification Tryptophan amide. The propeptide occupies 208 to 212 (SADPG). Tryptophan 217 carries the post-translational modification Tryptophan amide. The propeptide occupies 221–230 (ELVGLWGGKR). At tryptophan 236 the chain carries Tryptophan amide. A propeptide spanning residues 239-243 (SAEAG) is cleaved from the precursor. Tryptophan amide is present on residues tryptophan 248 and tryptophan 257. Residues 258–475 (GRSADPLQPG…GRSAGSGQLG (218 aa)) are disordered. Positions 260–264 (SADPL) are excised as a propeptide. Tryptophan amide is present on residues tryptophan 269 and tryptophan 278. A propeptide spanning residues 281-284 (SADP) is cleaved from the precursor. Tryptophan 290 and tryptophan 299 each carry tryptophan amide. Residues 302–305 (SADP) constitute a propeptide that is removed on maturation. Tryptophan 311 and tryptophan 320 each carry tryptophan amide. Positions 323–326 (SADP) are excised as a propeptide. A tryptophan amide mark is found at tryptophan 332 and tryptophan 341. A propeptide spanning residues 344 to 347 (SADP) is cleaved from the precursor. Tryptophan 353 is subject to Tryptophan amide. The propeptide occupies 356–366 (SPGLWGRSADP). Tryptophan 372 is subject to Tryptophan amide. Residues 376 to 387 (QNPGFWGRSADP) constitute a propeptide that is removed on maturation. Tryptophan amide is present on residues tryptophan 393 and tryptophan 402. Residues 405-408 (SADP) constitute a propeptide that is removed on maturation. Tryptophan amide is present on residues tryptophan 414 and tryptophan 423. The propeptide occupies 426-429 (SADP). A tryptophan amide mark is found at tryptophan 435 and tryptophan 444. Residues 447-450 (SADP) constitute a propeptide that is removed on maturation. Tryptophan amide is present on residues tryptophan 456 and tryptophan 465. The propeptide occupies 468–472 (SAGSG). Tryptophan amide is present on residues tryptophan 477 and tryptophan 487. A disordered region spans residues 489-514 (RSAEPPQFEDLEDLKKKSAIPQPKGQ). Positions 490–514 (SAEPPQFEDLEDLKKKSAIPQPKGQ) are excised as a propeptide.

It belongs to the LWamide neuropeptide family.

The protein resides in the secreted. Metamorphosin A may be part of an internal signaling system involved in control of metamorphosis. The sequence is that of LWamide neuropeptides from Anthopleura elegantissima (Green aggregating anemone).